Consider the following 167-residue polypeptide: Endoribonuclease YbeY (167 aa).

Zn(2+) is bound by residues His-131, His-135, and His-141.

This sequence belongs to the endoribonuclease YbeY family. Requires Zn(2+) as cofactor.

It localises to the cytoplasm. In terms of biological role, single strand-specific metallo-endoribonuclease involved in late-stage 70S ribosome quality control and in maturation of the 3' terminus of the 16S rRNA. The polypeptide is Endoribonuclease YbeY (Rickettsia akari (strain Hartford)).